The following is a 69-amino-acid chain: Beta-defensin 1 (69 aa).

Residues 1–21 form the signal peptide; that stretch reads MKTHYFLLVMLFFLFSQMELG. The propeptide occupies 22–32; sequence AGILTSLGRRT. Cystine bridges form between C37–C66, C44–C59, and C49–C67.

It belongs to the beta-defensin family. Monomer. Homodimer. In terms of tissue distribution, highly expressed in kidney.

The protein localises to the secreted. The protein resides in the membrane. Functionally, has bactericidal activity. May act as a ligand for C-C chemokine receptor CCR6. Positively regulates the sperm motility and bactericidal activity in a CCR6-dependent manner. Binds to CCR6 and triggers Ca2+ mobilization in the sperm which is important for its motility. The polypeptide is Beta-defensin 1 (Defb1) (Rattus norvegicus (Rat)).